Consider the following 59-residue polypeptide: Large ribosomal subunit protein bL32 (59 aa).

The segment covering 1-19 (MPVPKRRMSRSNTRSRRAQ) has biased composition (basic residues). The disordered stretch occupies residues 1–20 (MPVPKRRMSRSNTRSRRAQW).

The protein belongs to the bacterial ribosomal protein bL32 family.

The polypeptide is Large ribosomal subunit protein bL32 (Acidothermus cellulolyticus (strain ATCC 43068 / DSM 8971 / 11B)).